A 20-amino-acid polypeptide reads, in one-letter code: Astacin-like peptidase p18 (20 aa).

The 20-residue stretch at 1–20 (NAIPGNYYRWPYAKVPYVID) folds into the Peptidase M12A domain.

The cofactor is Zn(2+).

Active against casein. Has a role as a digestive enzyme. In Argiope aurantia (Black-and-yellow garden spider), this protein is Astacin-like peptidase p18.